Here is a 414-residue protein sequence, read N- to C-terminus: uncharacterized protein (414 aa).

A signal peptide spans 1–16 (MRVILLLAFLISLTEC). A Myb-like 1 domain is found at 20-59 (SEDLALYDLVEEVGVNFYEWFDIPRDASSNQVKKAYRKLT). The J domain occupies 35-99 (NFYEWFDIPR…ELREKYDNVL (65 aa)). The helical transmembrane segment at 125–145 (ILVLLFIGTIAHYLMMWAAYF) threads the bilayer. A disordered region spans residues 211–234 (MTPKEVEPEEPTEEELAQQRRQQR). Residues 217-226 (EPEEPTEEEL) are compositionally biased toward acidic residues. Residues 274-320 (AQKQSGATWTPDELASLVRLSTEKYPAGTPNRWEQMGRVLNRSAEDV) form the Myb-like 2 domain. The 56-residue stretch at 352–407 (KSEDDWSQAEQKAFETALQKYPKGTDERWERISEEIGSKTKKQVMVRFKQLAEMIR) folds into the SANT domain.

Its subcellular location is the nucleus membrane. This is an uncharacterized protein from Caenorhabditis elegans.